The following is a 339-amino-acid chain: Glycerol-3-phosphate dehydrogenase [NAD(P)+] (339 aa).

NADPH contacts are provided by Ser15, Tyr16, His36, and Lys110. Sn-glycerol 3-phosphate-binding residues include Lys110, Gly139, and Thr141. Ala143 is a binding site for NADPH. The sn-glycerol 3-phosphate site is built by Lys195, Asp248, Ser258, Arg259, and Asn260. The active-site Proton acceptor is Lys195. Arg259 is a binding site for NADPH. Residues Val283 and Glu285 each coordinate NADPH.

This sequence belongs to the NAD-dependent glycerol-3-phosphate dehydrogenase family.

The protein resides in the cytoplasm. It catalyses the reaction sn-glycerol 3-phosphate + NAD(+) = dihydroxyacetone phosphate + NADH + H(+). The catalysed reaction is sn-glycerol 3-phosphate + NADP(+) = dihydroxyacetone phosphate + NADPH + H(+). Its pathway is membrane lipid metabolism; glycerophospholipid metabolism. Its function is as follows. Catalyzes the reduction of the glycolytic intermediate dihydroxyacetone phosphate (DHAP) to sn-glycerol 3-phosphate (G3P), the key precursor for phospholipid synthesis. The polypeptide is Glycerol-3-phosphate dehydrogenase [NAD(P)+] (Shigella boydii serotype 18 (strain CDC 3083-94 / BS512)).